The primary structure comprises 581 residues: Multidrug and toxin extrusion protein 2 (581 aa).

At M1–T33 the chain is on the cytoplasmic side. Residues L34–V54 form a helical membrane-spanning segment. Residues S55–E66 are Extracellular-facing. Residues L67 to G87 form a helical membrane-spanning segment. Over L88–L119 the chain is Cytoplasmic. The helical transmembrane segment at L120 to F140 threads the bilayer. Residues R141–Y153 lie on the Extracellular side of the membrane. A helical membrane pass occupies residues V154–L174. The Cytoplasmic segment spans residues Q175–Q183. A helical transmembrane segment spans residues V184 to V204. Over L205 to S212 the chain is Extracellular. The chain crosses the membrane as a helical span at residues A213–L233. At K234–G253 the chain is on the cytoplasmic side. A helical transmembrane segment spans residues P254–Y273. Topologically, residues E274–R317 are extracellular. A helical membrane pass occupies residues I318–D338. The Cytoplasmic segment spans residues T339–A346. The chain crosses the membrane as a helical span at residues V347–L367. Residues K368 to D380 are Extracellular-facing. A helical membrane pass occupies residues V381–I401. The Cytoplasmic portion of the chain corresponds to C402–A420. Residues V421–V441 form a helical membrane-spanning segment. The Extracellular segment spans residues R442 to R444. Residues I445–A465 traverse the membrane as a helical segment. The Cytoplasmic segment spans residues Y466–R557. The segment at K481–S513 is disordered. Residues G558 to A578 traverse the membrane as a helical segment. Topologically, residues T579–H581 are extracellular.

The protein belongs to the multi antimicrobial extrusion (MATE) (TC 2.A.66.1) family.

The protein localises to the cell membrane. Its subcellular location is the apical cell membrane. It catalyses the reaction thiamine(out) + H(+)(in) = thiamine(in) + H(+)(out). The catalysed reaction is estrone 3-sulfate(in) + H(+)(out) = estrone 3-sulfate(out) + H(+)(in). The enzyme catalyses creatinine(in) + H(+)(out) = creatinine(out) + H(+)(in). Multidrug efflux pump that functions as a H(+)/organic cation antiporter. Mediates the efflux of cationic compounds, such as the model cations, tetraethylammonium (TEA) and 1-methyl-4-phenylpyridinium (MPP+), the platinum-based drug oxaliplatin or weak bases that are positively charged at physiological pH, cimetidine or the antidiabetic drug metformin. Mediates the efflux of the endogenous compounds creatinine, thiamine and estrone-3-sulfate. Plays a physiological role in the excretion of drugs, toxins and endogenous metabolites through the kidney. This Pongo abelii (Sumatran orangutan) protein is Multidrug and toxin extrusion protein 2 (SLC47A2).